The following is a 311-amino-acid chain: Malate dehydrogenase (311 aa).

10–15 (GAGHTG) provides a ligand contact to NAD(+). 2 residues coordinate substrate: Arg85 and Arg91. NAD(+) is bound by residues Asn98 and 121–123 (LTN). Substrate contacts are provided by Asn123 and Arg154. Catalysis depends on His178, which acts as the Proton acceptor.

It belongs to the LDH/MDH superfamily. MDH type 3 family.

It carries out the reaction (S)-malate + NAD(+) = oxaloacetate + NADH + H(+). Its function is as follows. Catalyzes the reversible oxidation of malate to oxaloacetate. This Staphylococcus carnosus (strain TM300) protein is Malate dehydrogenase.